Consider the following 267-residue polypeptide: DNA repair protein RecO (267 aa).

The protein belongs to the RecO family.

Involved in DNA repair and RecF pathway recombination. This Moorella thermoacetica (strain ATCC 39073 / JCM 9320) protein is DNA repair protein RecO.